The sequence spans 383 residues: MPAFKSRIESALAARKAQGLNRSMNVVFAGNQSILEHEGRRYINFSSNDYLGLANDQALVRAWQQGLSVYGSGSGASPMVTGFSAAHSNLEAALTEWLGFERAILFGSGFSANQALLFTLLEKSDVLIQDRLNHASLMEAGALSTAKMKRFKHNDIKHLETLFTNEGNHLVVTEGVFSMDGDCAPLKDIAEVARLRNAWLAVDDAHGIGVLGEAGGGSCELANVKPEILVVTFGKAFGMSGAAILCDQATGDFLTQFARHHVYSTAMPPAQAYALTHAVSMIQEQSWRREKLVELNEVYQTNLSDLDGFVETDTPIKPFVIGESELALQVANACRQNGIWVTAIRPPTVPKGTSRLRITLTANHSTEQVKTLSIALKQALGAL.

A substrate-binding site is contributed by R22. Residue 109–110 (GF) coordinates pyridoxal 5'-phosphate. Position 134 (H134) interacts with substrate. Pyridoxal 5'-phosphate is bound by residues S178, H206, and T232. N6-(pyridoxal phosphate)lysine is present on K235. Residue T348 participates in substrate binding.

This sequence belongs to the class-II pyridoxal-phosphate-dependent aminotransferase family. BioF subfamily. In terms of assembly, homodimer. Pyridoxal 5'-phosphate serves as cofactor.

The enzyme catalyses 6-carboxyhexanoyl-[ACP] + L-alanine + H(+) = (8S)-8-amino-7-oxononanoate + holo-[ACP] + CO2. Its pathway is cofactor biosynthesis; biotin biosynthesis. Its function is as follows. Catalyzes the decarboxylative condensation of pimeloyl-[acyl-carrier protein] and L-alanine to produce 8-amino-7-oxononanoate (AON), [acyl-carrier protein], and carbon dioxide. The sequence is that of 8-amino-7-oxononanoate synthase from Vibrio parahaemolyticus serotype O3:K6 (strain RIMD 2210633).